The sequence spans 339 residues: Protein pelota homolog (339 aa).

It belongs to the eukaryotic release factor 1 family. Pelota subfamily. Monomer. A divalent metal cation is required as a cofactor.

Its subcellular location is the cytoplasm. Its function is as follows. May function in recognizing stalled ribosomes, interact with stem-loop structures in stalled mRNA molecules, and effect endonucleolytic cleavage of the mRNA. May play a role in the release non-functional ribosomes and degradation of damaged mRNAs. Has endoribonuclease activity. The polypeptide is Protein pelota homolog (pelA) (Thermoplasma acidophilum (strain ATCC 25905 / DSM 1728 / JCM 9062 / NBRC 15155 / AMRC-C165)).